Consider the following 136-residue polypeptide: 1,4-dihydroxy-2-naphthoyl-CoA hydrolase (136 aa).

D16 is an active-site residue.

The protein belongs to the 4-hydroxybenzoyl-CoA thioesterase family. DHNA-CoA hydrolase subfamily.

The catalysed reaction is 1,4-dihydroxy-2-naphthoyl-CoA + H2O = 1,4-dihydroxy-2-naphthoate + CoA + H(+). It functions in the pathway cofactor biosynthesis; phylloquinone biosynthesis. Its pathway is quinol/quinone metabolism; 1,4-dihydroxy-2-naphthoate biosynthesis; 1,4-dihydroxy-2-naphthoate from chorismate: step 7/7. Its function is as follows. Catalyzes the hydrolysis of 1,4-dihydroxy-2-naphthoyl-CoA (DHNA-CoA) to 1,4-dihydroxy-2-naphthoate (DHNA), a reaction involved in phylloquinone (vitamin K1) biosynthesis. The chain is 1,4-dihydroxy-2-naphthoyl-CoA hydrolase from Synechococcus sp. (strain ATCC 27144 / PCC 6301 / SAUG 1402/1) (Anacystis nidulans).